A 483-amino-acid polypeptide reads, in one-letter code: Sphingomyelin phosphodiesterase 5 (483 aa).

Residues 1-20 (MSLPDISRRRSPVPQEDWPL) form a disordered region. The chain crosses the membrane as a helical span at residues 80 to 100 (VLLPLVVVGLPLALVGLALWL). Mg(2+) is bound at residue E209. The active-site Proton acceptor is the H471.

This sequence belongs to the neutral sphingomyelinase family. Requires Mg(2+) as cofactor. It depends on Mn(2+) as a cofactor. In terms of tissue distribution, highly expressed in testis, pancreas, epididymis, and brain.

The protein localises to the mitochondrion inner membrane. The protein resides in the endoplasmic reticulum membrane. It catalyses the reaction a sphingomyelin + H2O = phosphocholine + an N-acylsphing-4-enine + H(+). The enzyme catalyses N-(hexadecanoyl)-sphing-4-enine-1-phosphocholine + H2O = N-hexadecanoylsphing-4-enine + phosphocholine + H(+). The protein operates within lipid metabolism; sphingolipid metabolism. Its activity is regulated as follows. Activated by anionic phospholipids, specially cardiolipin and phosphatidylserine. Its function is as follows. Catalyzes the hydrolysis of membrane sphingomyelin to form phosphorylcholine and ceramide. This Mus musculus (Mouse) protein is Sphingomyelin phosphodiesterase 5.